Consider the following 941-residue polypeptide: Heat shock protein 70 homolog (941 aa).

The segment at 851-887 is disordered; that stretch reads ENQPDIPEDSEDSESEDDTTTSKDSESSEITENLALP. The span at 856-869 shows a compositional bias: acidic residues; it reads IPEDSEDSESEDDT.

This sequence belongs to the heat shock protein 70 family.

Probable chaperone. The protein is Heat shock protein 70 homolog of Acanthamoeba polyphaga (Amoeba).